The sequence spans 251 residues: Cathelicidin-B1 (251 aa).

Positions 1-20 (MGRMWASEVLLLLLLGSSRA) are cleaved as a signal peptide. Positions 21-211 (VTPGLDVSTA…ELRCRPLRPQ (191 aa)) are excised as a propeptide. A disordered region spans residues 29–109 (TAPGLDGSIP…TITPKQDGSI (81 aa)). 2 disulfides stabilise this stretch: Cys-172-Cys-181 and Cys-189-Cys-205.

The protein belongs to the cathelicidin family. As to expression, detected in bursa of Fabricius, in filamentous structures surrounding the basal and lateral surfaces of bursal M cells (at protein level). Detected in bursa of Fabricius, in secretory enterocytes of the interfollicular bursal epithelium, but not in M cells.

Its subcellular location is the secreted. In terms of biological role, has potent antimicrobial activity against Gram-positive and Gram-negative bacteria (in vitro). May play a role in the innate immune response. This Gallus gallus (Chicken) protein is Cathelicidin-B1 (CATHB1).